We begin with the raw amino-acid sequence, 341 residues long: LIM and senescent cell antigen-like-containing domain protein 2 (341 aa).

5 consecutive LIM zinc-binding domains span residues 13 to 74 (AMCQ…LFAP), 76 to 133 (CGFC…EKAK), 138 to 195 (FICQ…KMGI), 196 to 255 (PICG…LFGD), and 256 to 315 (VCYN…FPLE). Ser-328 bears the Phosphoserine mark.

Interacts with integrin-linked protein kinase 1 (ILK) via the first LIM domain, and in competition with LIMS1. Part of the heterotrimeric IPP complex composed of integrin-linked kinase (ILK), LIMS1 or LIMS2, and PARVA. Interacts with TGFB1I1. In terms of tissue distribution, detected in heart, lung, kidney, liver, urinary bladder, fat, skin, skeletal muscle, uterus, large intestine and testis.

Its subcellular location is the cell junction. The protein resides in the focal adhesion. It localises to the cell membrane. Its function is as follows. Adapter protein in a cytoplasmic complex linking beta-integrins to the actin cytoskeleton, bridges the complex to cell surface receptor tyrosine kinases and growth factor receptors. In Mus musculus (Mouse), this protein is LIM and senescent cell antigen-like-containing domain protein 2 (Lims2).